A 549-amino-acid polypeptide reads, in one-letter code: Hydroxylamine reductase (549 aa).

Cys3, Cys6, Cys15, and Cys21 together coordinate [4Fe-4S] cluster. Hybrid [4Fe-2O-2S] cluster contacts are provided by His244, Glu268, Cys313, Cys405, Cys433, Cys458, Glu492, and Lys494. Residue Cys405 is modified to Cysteine persulfide.

Belongs to the HCP family. Requires [4Fe-4S] cluster as cofactor. Hybrid [4Fe-2O-2S] cluster is required as a cofactor.

The protein resides in the cytoplasm. The catalysed reaction is A + NH4(+) + H2O = hydroxylamine + AH2 + H(+). In terms of biological role, catalyzes the reduction of hydroxylamine to form NH(3) and H(2)O. The chain is Hydroxylamine reductase from Gloeothece citriformis (strain PCC 7424) (Cyanothece sp. (strain PCC 7424)).